Reading from the N-terminus, the 159-residue chain is Eukaryotic translation initiation factor 5A-5 (159 aa).

Residues Met1 to Ala12 show a composition bias toward basic and acidic residues. Residues Met1 to Gln23 form a disordered region. Lys52 carries the post-translational modification Hypusine.

The protein belongs to the eIF-5A family. Lys-52 undergoes hypusination, a unique post-translational modification that consists in the addition of a butylamino group from spermidine to lysine side chain, leading to the formation of the unusual amino acid hypusine. eIF-5As are the only known proteins to undergo this modification, which is essential for their function.

Its function is as follows. Translation factor that promotes translation elongation and termination, particularly upon ribosome stalling at specific amino acid sequence contexts. Binds between the exit (E) and peptidyl (P) site of the ribosome and promotes rescue of stalled ribosome: specifically required for efficient translation of polyproline-containing peptides as well as other motifs that stall the ribosome. Acts as a ribosome quality control (RQC) cofactor by joining the RQC complex to facilitate peptidyl transfer during CAT tailing step. In Solanum tuberosum (Potato), this protein is Eukaryotic translation initiation factor 5A-5 (EIF5A5).